The sequence spans 178 residues: ATP-dependent protease subunit HslV (178 aa).

Residue threonine 7 is part of the active site. Na(+)-binding residues include glycine 162, cysteine 165, and threonine 168.

Belongs to the peptidase T1B family. HslV subfamily. In terms of assembly, a double ring-shaped homohexamer of HslV is capped on each side by a ring-shaped HslU homohexamer. The assembly of the HslU/HslV complex is dependent on binding of ATP.

It localises to the cytoplasm. It carries out the reaction ATP-dependent cleavage of peptide bonds with broad specificity.. Its activity is regulated as follows. Allosterically activated by HslU binding. Protease subunit of a proteasome-like degradation complex believed to be a general protein degrading machinery. This chain is ATP-dependent protease subunit HslV, found in Burkholderia ambifaria (strain ATCC BAA-244 / DSM 16087 / CCUG 44356 / LMG 19182 / AMMD) (Burkholderia cepacia (strain AMMD)).